Here is a 415-residue protein sequence, read N- to C-terminus: Polyketide biosynthesis malonyl-ACP decarboxylase PksF (415 aa).

The 402-residue stretch at 6 to 407 folds into the Ketosynthase family 3 (KS3) domain; it reads LPEVVVTGVG…GMNTAVCIQN (402 aa).

This sequence belongs to the thiolase-like superfamily. Beta-ketoacyl-ACP synthases family.

It localises to the cytoplasm. The catalysed reaction is malonyl-[ACP] + H(+) = acetyl-[ACP] + CO2. It functions in the pathway antibiotic biosynthesis; bacillaene biosynthesis. In terms of biological role, involved in some intermediate steps for the synthesis of the antibiotic polyketide bacillaene which is involved in secondary metabolism. It decarboxylates selectively the malonyl group attached on the acyl-carrier-protein AcpK (Mal-AcpK). The protein is Polyketide biosynthesis malonyl-ACP decarboxylase PksF (pksF) of Bacillus subtilis (strain 168).